Here is a 967-residue protein sequence, read N- to C-terminus: Phosphatidylserine decarboxylase proenzyme 3 (967 aa).

Positions 217–255 (FIAEPDSSIPPSESSVSISTDTGKETPPSKSKKSSNQPY) are disordered. Positions 220-237 (EPDSSIPPSESSVSISTD) are enriched in low complexity. A C2 domain is found at 250–373 (SSNQPYVSIG…SSAQVDPETG (124 aa)). Ca(2+) contacts are provided by aspartate 343, serine 346, and aspartate 349. Low complexity predominate over residues 532–544 (DQQATQTPQSPSS). The segment at 532–566 (DQQATQTPQSPSSNEESGPGTPTQTSDQYEDSEDS) is disordered. Polar residues predominate over residues 545-558 (NEESGPGTPTQTSD). Residues aspartate 769, histidine 825, and serine 912 each act as charge relay system; for autoendoproteolytic cleavage activity in the active site. The active-site Schiff-base intermediate with substrate; via pyruvic acid; for decarboxylase activity is the serine 912. Serine 912 is modified (pyruvic acid (Ser); by autocatalysis). Positions 947–967 (IGQKIDPNKPTDAEDHSKSDS) are disordered.

This sequence belongs to the phosphatidylserine decarboxylase family. PSD-B subfamily. Eukaryotic type II sub-subfamily. As to quaternary structure, heterodimer of a large membrane-associated beta subunit and a small pyruvoyl-containing alpha subunit. Pyruvate serves as cofactor. It depends on Ca(2+) as a cofactor. In terms of processing, is synthesized initially as an inactive proenzyme. Formation of the active enzyme involves a self-maturation process in which the active site pyruvoyl group is generated from an internal serine residue via an autocatalytic post-translational modification. Two non-identical subunits are generated from the proenzyme in this reaction, and the pyruvate is formed at the N-terminus of the alpha chain, which is derived from the carboxyl end of the proenzyme. The autoendoproteolytic cleavage occurs by a canonical serine protease mechanism, in which the side chain hydroxyl group of the serine supplies its oxygen atom to form the C-terminus of the beta chain, while the remainder of the serine residue undergoes an oxidative deamination to produce ammonia and the pyruvoyl prosthetic group on the alpha chain. During this reaction, the Ser that is part of the protease active site of the proenzyme becomes the pyruvoyl prosthetic group, which constitutes an essential element of the active site of the mature decarboxylase.

It localises to the golgi apparatus membrane. The protein localises to the endosome membrane. It is found in the cytoplasm. The catalysed reaction is a 1,2-diacyl-sn-glycero-3-phospho-L-serine + H(+) = a 1,2-diacyl-sn-glycero-3-phosphoethanolamine + CO2. It functions in the pathway phospholipid metabolism; phosphatidylethanolamine biosynthesis; phosphatidylethanolamine from CDP-diacylglycerol: step 2/2. Its function is as follows. Catalyzes the formation of phosphatidylethanolamine (PtdEtn) from phosphatidylserine (PtdSer). Plays a central role in phospholipid metabolism and in the interorganelle trafficking of phosphatidylserine. Together with psd1 and psd2, responsible for the majority of phosphatidylethanolamine synthesis. This is Phosphatidylserine decarboxylase proenzyme 3 from Schizosaccharomyces pombe (strain 972 / ATCC 24843) (Fission yeast).